The following is a 554-amino-acid chain: Glutamine--tRNA ligase (554 aa).

Residues 33–43 (PEPNGYLHIGH) carry the 'HIGH' region motif. ATP-binding positions include 34 to 36 (EPN) and 40 to 46 (HIGHAKS). L-glutamine is bound by residues Asp-66 and Tyr-210. Residues Thr-229, 259 to 260 (RL), and 267 to 269 (MSK) contribute to the ATP site. The short motif at 266-270 (VMSKR) is the 'KMSKS' region element.

This sequence belongs to the class-I aminoacyl-tRNA synthetase family. In terms of assembly, monomer.

The protein localises to the cytoplasm. It catalyses the reaction tRNA(Gln) + L-glutamine + ATP = L-glutaminyl-tRNA(Gln) + AMP + diphosphate. In Clostridioides difficile (strain 630) (Peptoclostridium difficile), this protein is Glutamine--tRNA ligase.